A 343-amino-acid chain; its full sequence is Glucokinase (343 aa).

An ATP-binding site is contributed by 18 to 23 (GDIGGT).

This sequence belongs to the bacterial glucokinase family.

It is found in the cytoplasm. The enzyme catalyses D-glucose + ATP = D-glucose 6-phosphate + ADP + H(+). The chain is Glucokinase from Brucella melitensis biotype 1 (strain ATCC 23456 / CCUG 17765 / NCTC 10094 / 16M).